The following is a 530-amino-acid chain: MVSQAKQPSNATFKNREKPQEVRKANIIAARAVADAIRTSLGPKGMDKMIKTSRGDIIISNDGHTILKQMAILHPVAKMLVEVSGAQDVEAGDGTTSVVIMTGALLGAAEKLLNKGIHPTIIAESFQRAAERSVEILLNMSTKISLDDKEALVRAASTSLSSKIVSQHSSFLAPLAVDCVLSIASHDSTNVDLNDIRLIKKVGGTIDDTEMVNGVVLTQNAVKTAGGPTRIEKARIGLIQFQISPPKPDTENNIVVNDYRQMDKILKEERAYLLNICKKIKKAKCNVLLIQKSILRDAVNDLALHFLSKLGIMVVRDIERDEVEFLSKSLGCKPISDVELFTEDRLGSADVVEEVESDGSNIVTITGVKTTNKNPTVSVVIRGANNMVLDETERSLHDALCVIRCLVKERALIAGGGAPEIEVSYRLMKEARTMEGVEAFVWQEYAEALEVIPTTLAENAGLNSLNVVTELRLRHENGESNSGISVRRSGTSNTYEDHILQPVLVSTSAIRLASECVKSILRIDDITFSR.

Residues 1-13 (MVSQAKQPSNATF) are compositionally biased toward polar residues. The interval 1–20 (MVSQAKQPSNATFKNREKPQ) is disordered.

The protein belongs to the TCP-1 chaperonin family. Heterooligomeric complex of about 850 to 900 kDa that forms two stacked rings, 12 to 16 nm in diameter.

It is found in the cytoplasm. In terms of biological role, molecular chaperone; assists the folding of proteins upon ATP hydrolysis. Known to play a role, in vitro, in the folding of actin and tubulin. This is T-complex protein 1 subunit delta (CCT4) from Kluyveromyces lactis (strain ATCC 8585 / CBS 2359 / DSM 70799 / NBRC 1267 / NRRL Y-1140 / WM37) (Yeast).